The sequence spans 314 residues: tRNA pseudouridine synthase B (314 aa).

A substrate-binding site is contributed by H43. D48 serves as the catalytic Nucleophile. Residues Y76, Y179, and L200 each coordinate substrate.

This sequence belongs to the pseudouridine synthase TruB family. Type 1 subfamily.

It catalyses the reaction uridine(55) in tRNA = pseudouridine(55) in tRNA. Its function is as follows. Responsible for synthesis of pseudouridine from uracil-55 in the psi GC loop of transfer RNAs. The protein is tRNA pseudouridine synthase B of Escherichia coli O139:H28 (strain E24377A / ETEC).